Consider the following 93-residue polypeptide: MIKENSYFAGNVKSLGFNQQGEDSSVGVMLPGNYTFGTDAPERMTVVKGALVIKREGDEEWSTYQAGEAFEVAGKSSFDLQVEVATAYLCEYL.

Belongs to the nucleoside phosphorylase PpnP family.

The enzyme catalyses a purine D-ribonucleoside + phosphate = a purine nucleobase + alpha-D-ribose 1-phosphate. It catalyses the reaction adenosine + phosphate = alpha-D-ribose 1-phosphate + adenine. The catalysed reaction is cytidine + phosphate = cytosine + alpha-D-ribose 1-phosphate. It carries out the reaction guanosine + phosphate = alpha-D-ribose 1-phosphate + guanine. The enzyme catalyses inosine + phosphate = alpha-D-ribose 1-phosphate + hypoxanthine. It catalyses the reaction thymidine + phosphate = 2-deoxy-alpha-D-ribose 1-phosphate + thymine. The catalysed reaction is uridine + phosphate = alpha-D-ribose 1-phosphate + uracil. It carries out the reaction xanthosine + phosphate = alpha-D-ribose 1-phosphate + xanthine. Catalyzes the phosphorolysis of diverse nucleosides, yielding D-ribose 1-phosphate and the respective free bases. Can use uridine, adenosine, guanosine, cytidine, thymidine, inosine and xanthosine as substrates. Also catalyzes the reverse reactions. The chain is Pyrimidine/purine nucleoside phosphorylase from Vibrio vulnificus (strain CMCP6).